An 848-amino-acid chain; its full sequence is Transforming growth factor beta receptor type 3 (848 aa).

A signal peptide spans 1–20; the sequence is MTLHCVVALFALISSCLATA. At 21 to 784 the chain is on the extracellular side; sequence GPEPGVQCAL…IFHGLDTLTV (764 aa). Asn34 and Asn141 each carry an N-linked (GlcNAc...) asparagine glycan. A disulfide bridge connects residues Cys52 and Cys197. The disordered stretch occupies residues 390-448; sequence SGEGAARHGGLPFPFPYIPRRGRQDGGKDRLPRPKDPVVPSIQLLPGPREPQEAQGSRD. Positions 411-425 are enriched in basic and acidic residues; that stretch reads GRQDGGKDRLPRPKD. One can recognise a ZP domain in the interval 454 to 729; sequence RCDSEKMLVA…PKCVLPDEAC (276 aa). Asn491 carries N-linked (GlcNAc...) asparagine glycosylation. O-linked (Xyl...) (glycosaminoglycan) serine glycosylation is found at Ser529, Ser533, and Ser544. N-linked (GlcNAc...) asparagine glycosylation is found at Asn570, Asn589, and Asn696. Intrachain disulfides connect Cys638-Cys704, Cys659-Cys729, and Cys709-Cys722. An interaction with TGF-beta ligand region spans residues 736–750; that stretch reads MIWAMMQNKKTFTKP. Residues 785–806 form a helical membrane-spanning segment; that stretch reads MGIAFAAFVIGALLTGALWYIY. Over 807-848 the chain is Cytoplasmic; it reads SHTGDSAGRQPVPTSPPASENSSAAHSLGSTQSTPCSSSSAA. Residues 813–848 form a disordered region; it reads AGRQPVPTSPPASENSSAAHSLGSTQSTPCSSSSAA. Low complexity predominate over residues 833-848; sequence SLGSTQSTPCSSSSAA. The residue at position 837 (Thr837) is a Phosphothreonine.

Forms homodimers and homooligomers. Interacts with DYNLT4. Interacts with integrin ITGA5:ITGB1; this interaction promotes the internalization and trafficking of ITGA5:ITGB1 into endocytic vesicles. Interacts with TGFB1, BMP2, BMP5, BMP7 or GDF5 and inhibin A via the ligand binding domains. Interacts with ALK3/BMPR1A; this interaction results in the cell surface retention of BMPR1A. Interacts with ALK6/BMPR1B; this interaction enhances BMPR1B-mediated stimulation of the BMP signaling pathway. Interacts with the scaffolding protein beta-arrestin2/ARRB2; this interaction mediates internalization of TGFBR3 and thus regulates migration, actin cytoskeleton and activation of CDC42. In terms of processing, extensively modified by glycosaminoglycan groups (GAG). Phosphorylated in the cytoplasmic domain by the type II receptor TGFBR2 at THR-837 to mediate recruitment of ARRB2 and subsequent internalization of TGFBR2 and TGFBR3.

It localises to the cell membrane. Its subcellular location is the secreted. The protein localises to the extracellular space. The protein resides in the extracellular matrix. Cell surface receptor that regulates diverse cellular processes including cell proliferation, differentiation, migration, and apoptosis. Initiates BMP, inhibin, and TGF-beta signaling pathways by interacting with different ligands including TGFB1, BMP2, BMP5, BMP7 or GDF5. Alternatively, acts as a cell surface coreceptor for BMP ligands, serving to enhance ligand binding by differentially regulating BMPR1A/ALK3 and BMPR1B/ALK6 receptor trafficking. Promotes epithelial cell adhesion, focal adhesion formation and integrin signaling during epithelial cell spreading on fibronectin. By interacting with the scaffolding protein beta-arrestin2/ARRB2, regulates migration or actin cytoskeleton and promotes the activation of CDC42 as well as the inhibition of NF-kappa-B. In gonadotrope cells, acts as an inhibin A coreceptor and regulates follicle-stimulating hormone (FSH) levels and female fertility. Plays a role in the inhibition of directed and random cell migration in epithelial cells by altering the actin cytoskeletal organization. Participates in epithelial-mesenchymal transformation (EMT) upon binding to BMP2 or TGFB2, by activating the PAR6/SMURF1/RHOA pathway. This is Transforming growth factor beta receptor type 3 (TGFBR3) from Sus scrofa (Pig).